The sequence spans 881 residues: Serine/threonine-protein kinase/endoribonuclease IRE1b (881 aa).

Positions 1 to 21 are cleaved as a signal peptide; sequence MRGSALLDLILFLLVSPLAHS. At 22–357 the chain is on the lumenal side; the sequence is FKGSEISKFY…KQAGFASKFS (336 aa). An N-linked (GlcNAc...) asparagine glycan is attached at Asn115. A helical transmembrane segment spans residues 358–378; the sequence is GLIVLIFGFCVTMLSVCGLFF. Residues 379-881 lie on the Cytoplasmic side of the membrane; that stretch reads YRLRQSIRIK…FFKYSKTTVF (503 aa). Residues 459–744 form the Protein kinase domain; it reads FVSNKEIAKG…AQDVMHHPLF (286 aa). Residues 465 to 473 and Lys487 each bind ATP; that span reads IAKGSNGTV. Residues 481 to 502 form an ATP selon article region; that stretch reads GRLVAVKRLVQSHHDVAQKEIL. Asp608 functions as the Proton acceptor in the catalytic mechanism. The interval 642–661 is disordered; that stretch reads LTRNSTGLGSGSSGWQAPEQ. Residues 747–878 form the KEN domain; the sequence is SDMRLSFLRD…EEFFFKYSKT (132 aa).

The protein belongs to the protein kinase superfamily. Ser/Thr protein kinase family. As to quaternary structure, homodimer; disulfide-linked. Dimer formation is driven by hydrophobic interactions within the N-terminal luminal domains and stabilized by disulfide bridges. Mg(2+) serves as cofactor. Autophosphorylated. As to expression, ubiquitous. Detected in the apical meristem, at leaf margins where vascular bundles end, in the anthers before pollen is formed and in the ovules at a very early stage of development. There is no expression in more mature embryos. Also strongly expressed in the cotyledons immediately after germination but not later on.

It is found in the endoplasmic reticulum membrane. It carries out the reaction L-seryl-[protein] + ATP = O-phospho-L-seryl-[protein] + ADP + H(+). The enzyme catalyses L-threonyl-[protein] + ATP = O-phospho-L-threonyl-[protein] + ADP + H(+). Its activity is regulated as follows. The kinase domain is activated by trans-autophosphorylation. Kinase activity is required for activation of the endoribonuclease domain. Its function is as follows. Senses unfolded proteins in the lumen of the endoplasmic reticulum via its N-terminal domain which leads to enzyme auto-activation. The active endoribonuclease domain splices bZIP60 mRNA to generate a new C-terminus, converting it into a potent unfolded-protein response transcriptional activator which then induces transcription of UPR target genes. Involved in organ growth regulation. Plays a role in plant immunity and abiotic stress responses. Required for ER stress-induced autophagy. In Arabidopsis thaliana (Mouse-ear cress), this protein is Serine/threonine-protein kinase/endoribonuclease IRE1b (IRE1B).